Here is a 126-residue protein sequence, read N- to C-terminus: Arginine decarboxylase proenzyme (126 aa).

Ser-74 (schiff-base intermediate with substrate; via pyruvic acid) is an active-site residue. Ser-74 bears the Pyruvic acid (Ser); by autocatalysis mark. Catalysis depends on His-79, which acts as the Proton acceptor; for processing activity. The active-site Proton donor; for catalytic activity is the Cys-94.

Belongs to the prokaryotic AdoMetDC family. Type 1 subfamily. Heterooctamer of four alpha and four beta chains arranged as a tetramer of alpha/beta heterodimers. Pyruvate serves as cofactor. Post-translationally, is synthesized initially as an inactive proenzyme. Formation of the active enzyme involves a self-maturation process in which the active site pyruvoyl group is generated from an internal serine residue via an autocatalytic post-translational modification. Two non-identical subunits are generated from the proenzyme in this reaction, and the pyruvate is formed at the N-terminus of the alpha chain, which is derived from the carboxyl end of the proenzyme. The post-translation cleavage follows an unusual pathway, termed non-hydrolytic serinolysis, in which the side chain hydroxyl group of the serine supplies its oxygen atom to form the C-terminus of the beta chain, while the remainder of the serine residue undergoes an oxidative deamination to produce ammonia and the pyruvoyl group blocking the N-terminus of the alpha chain.

The catalysed reaction is L-arginine + H(+) = agmatine + CO2. The protein operates within amine and polyamine biosynthesis; agmatine biosynthesis; agmatine from L-arginine: step 1/1. Its function is as follows. Specifically catalyzes the decarboxylation of L-arginine to agmatine. Has no S-adenosylmethionine decarboxylase (AdoMetDC) activity. In Pyrobaculum neutrophilum (strain DSM 2338 / JCM 9278 / NBRC 100436 / V24Sta) (Thermoproteus neutrophilus), this protein is Arginine decarboxylase proenzyme.